A 71-amino-acid polypeptide reads, in one-letter code: UPF0346 protein Bcer98_1690 (71 aa).

This sequence belongs to the UPF0346 family.

The protein is UPF0346 protein Bcer98_1690 of Bacillus cytotoxicus (strain DSM 22905 / CIP 110041 / 391-98 / NVH 391-98).